Here is a 370-residue protein sequence, read N- to C-terminus: N-acyl-L-amino acid amidohydrolase (370 aa).

It belongs to the peptidase M20 family. Homotetramer. The cofactor is Co(2+).

It catalyses the reaction an N-acyl-L-amino acid + H2O = an L-alpha-amino acid + a carboxylate. The enzyme catalyses an N-acetyl-L-cysteine-S-conjugate + H2O = an S-substituted L-cysteine + acetate. In terms of biological role, hydrolyzes most efficiently N-acetyl derivatives of aromatic amino acids but is also active on other amino acids. L-stereospecific. The protein is N-acyl-L-amino acid amidohydrolase (amaA) of Geobacillus stearothermophilus (Bacillus stearothermophilus).